A 239-amino-acid chain; its full sequence is Lactate utilization protein A (239 aa).

It belongs to the LutA/YkgE family.

In terms of biological role, is involved in L-lactate degradation and allows cells to grow with lactate as the sole carbon source. This chain is Lactate utilization protein A, found in Geobacillus kaustophilus (strain HTA426).